The sequence spans 236 residues: Syntaxin-8 (236 aa).

Topologically, residues 1–215 are cytoplasmic; the sequence is MAPDPWFSTY…LVDRKSTSCG (215 aa). A coiled-coil region spans residues 42–65; sequence LTIRTLLKNLKVKIDLLKDLLLRA. The t-SNARE coiled-coil homology domain maps to 145–207; it reads QKIIQEQDAG…RTEARRVTLV (63 aa). The residue at position 160 (serine 160) is a Phosphoserine. Residues 216–232 form a helical; Anchor for type IV membrane protein membrane-spanning segment; it reads MIMVILLLLVAIVVVAV. At 233–236 the chain is on the vesicular side; sequence WPTN.

It belongs to the syntaxin family. In terms of assembly, forms a SNARE complex with STX7, VTI1B and VAMP8 which functions in the homotypic fusion of late endosomes. Part of the SNARE core complex containing STX7, VAMP8 and VTI1B. Interacts with VAMP8. Interacts with HECTD3. Interacts with TPC1. Post-translationally, ubiquitinated by HECTD3.

It localises to the membrane. Vesicle trafficking protein that functions in the early secretory pathway, possibly by mediating retrograde transport from cis-Golgi membranes to the ER. The polypeptide is Syntaxin-8 (Stx8) (Mus musculus (Mouse)).